The primary structure comprises 339 residues: Phosphoribosylformylglycinamidine cyclo-ligase (339 aa).

This sequence belongs to the AIR synthase family.

It is found in the cytoplasm. The catalysed reaction is 2-formamido-N(1)-(5-O-phospho-beta-D-ribosyl)acetamidine + ATP = 5-amino-1-(5-phospho-beta-D-ribosyl)imidazole + ADP + phosphate + H(+). It participates in purine metabolism; IMP biosynthesis via de novo pathway; 5-amino-1-(5-phospho-D-ribosyl)imidazole from N(2)-formyl-N(1)-(5-phospho-D-ribosyl)glycinamide: step 2/2. This Desulfitobacterium hafniense (strain DSM 10664 / DCB-2) protein is Phosphoribosylformylglycinamidine cyclo-ligase.